A 97-amino-acid polypeptide reads, in one-letter code: MAPDLDQRIETYYVRVRGTVQGVGFRHATVRQAHALGIKGWVANLDDGSVEAMLQGSANQVDRMLSWLRHGPPAARVTEVSGEERSTEKRYERFEQH.

The 87-residue stretch at Thr-11 to His-97 folds into the Acylphosphatase-like domain. Active-site residues include Arg-26 and Asn-44. The disordered stretch occupies residues Arg-76–His-97. Residues Gly-82–His-97 show a composition bias toward basic and acidic residues.

It belongs to the acylphosphatase family.

It carries out the reaction an acyl phosphate + H2O = a carboxylate + phosphate + H(+). In Paraburkholderia xenovorans (strain LB400), this protein is Acylphosphatase (acyP).